We begin with the raw amino-acid sequence, 30 residues long: V-type proton ATPase catalytic subunit A isoform 1 (30 aa).

Belongs to the ATPase alpha/beta chains family. V-ATPase is a heteromultimeric enzyme composed of a peripheral catalytic V1 complex (main components: subunits A, B, C, D, E, and F) attached to an integral membrane V0 proton pore complex (main component: the proteolipid protein).

The enzyme catalyses ATP + H2O + 4 H(+)(in) = ADP + phosphate + 5 H(+)(out). In terms of biological role, catalytic subunit of the peripheral V1 complex of vacuolar ATPase. V-ATPase vacuolar ATPase is responsible for acidifying a variety of intracellular compartments in eukaryotic cells. The chain is V-type proton ATPase catalytic subunit A isoform 1 from Equisetum arvense (Field horsetail).